Reading from the N-terminus, the 300-residue chain is Putative glycosyltransferase ORF300 (300 aa).

The protein belongs to the glycosyltransferase group 1 family. Glycosyltransferase 4 subfamily.

The protein is Putative glycosyltransferase ORF300 of Acidianus hospitalis (AFV-1).